Consider the following 1392-residue polypeptide: Leucine-rich PPR motif-containing protein, mitochondrial (1392 aa).

The transit peptide at 1–59 (MAALLRPARWLLGAAAAPRLPLSLRLPAGVPGRLSSVVRVAAVGSRPAAGERLSQARLY) directs the protein to the mitochondrion. 14 PPR repeats span residues 125–159 (LLRSCGSLLPELSLAERTEFAHKIWDKLQQLGVVY), 160–194 (DVSHYNALLKVYLQNEYKFSPTDFLAKMEGANIQP), 195–229 (NRVTYQRLIAAYCNVGDIEGASKILGFMKTKDLPI), 230–264 (TEAVFSALVTGHARAGDMENAENILTVMKQAGIEP), 265–299 (GPDTYLALLNAHAERGDIGQVRQILEKVEKSDHYF), 300–334 (MDRDFLQVIFSFSKAGYPQYVSEILEKITYERRSI), 402–436 (HSSSLQFTLHCALQANRTALAKAVMEALREEGFPI), 437–471 (RPHYFWPLLAGHQKTKNVQGIIDILKIMNKVGVDP), 677–708 (VGSALKQLLLLLCSEENMQKALEVKAKYESDM), 709–745 (VIGGYAALINLCCRHDNAEDAWNLKQEVDRLDASAIL), 746–783 (DTAKYVALVKVLGKHSRLQDAINILKEMKEKDVVIKDA), 784–820 (TVLSFFHILNGAALRGEIETVKQLHEAIVTLGLAKPS), 821–856 (SNISFPLVTVHLEKGDLPAALEASIACHKKYKVLPR), and 953–987 (RDQMYYNLLKLYKISSDWQRADAAWTKMQEENIIP). An N6-acetyllysine mark is found at K151, K186, and K225. K291 carries the post-translational modification N6-acetyllysine. An N6-acetyllysine modification is found at K462. N6-acetyllysine is present on K749. The segment at 931–1050 (ASNQVEALEK…NCKLKKSKDA (120 aa)) is RNA-binding. Residues S1025, S1026, and S1028 each carry the phosphoserine modification. PPR repeat units lie at residues 1030–1064 (GEDVTEKTLLSNCKLKKSKDAYNIFLKAEKQNVVF), 1065–1101 (SSETYSTLIGLLLSKDDFTQAMHVKDFAETHIKGFTL), 1102–1136 (NDAANSLLIIRQVRRDYLKGALATLRAALDLKQVP), 1137–1175 (SQIAVTRLIQALALKGDVESIEAIQRMVAGLDTIGLSKM), 1176–1210 (VFINNIALAQMKNNKLDAAIENIEHLLASENQAIE), and 1315–1349 (NDKVYSCSMKSYALDKDVASAKALYEYLTAKNLKL). Residue S1137 is modified to Phosphoserine.

Component of mRNP complexes associated with HNRPA1. Component of the complex, at least composed of LRPPRC, BECN1 and BCL2; the interactions prevent BECN1 from forming an autophagy-inducing complex with PIK3C3. Interacts with CECR2, HEBP2, MAP1S and UXT. Interacts with PPARGC1A. Interacts with FOXO1. Interacts (via N-terminus) with EIF4E; the interaction promotes association of EIF4E with 4ESE-containing mRNAs. Interacts with exportin XPO1/CRM1; interacts both alone and in complex with EIF4E and 4ESE-containing mRNAs to form an EIF4E-dependent mRNA export complex. Interacts with importin IPO8; the interaction occurs when LRPPRC is in its RNA-free form and returns LRPPRC to the nucleus for further export rounds. Interacts with BECN1. In terms of tissue distribution, strongly expressed in heart, liver and kidney. Weakly expressed in brain, skeletal muscle and testes.

Its subcellular location is the mitochondrion. It is found in the nucleus. It localises to the nucleoplasm. The protein localises to the nucleus inner membrane. The protein resides in the nucleus outer membrane. In terms of biological role, may play a role in RNA metabolism in both nuclei and mitochondria. In the nucleus binds to HNRPA1-associated poly(A) mRNAs and is part of nmRNP complexes at late stages of mRNA maturation which are possibly associated with nuclear mRNA export. Positively modulates nuclear export of mRNAs containing the EIF4E sensitivity element (4ESE) by binding simultaneously to both EIF4E and the 4ESE and acting as a platform for assembly for the RNA export complex. Also binds to exportin XPO1/CRM1 to engage the nuclear pore and traffic the bound mRNAs to the cytoplasm. May bind mature mRNA in the nucleus outer membrane. In mitochondria binds to poly(A) mRNA. Plays a role in translation or stability of mitochondrially encoded cytochrome c oxidase (COX) subunits. May be involved in transcription regulation. Cooperates with PPARGC1A to regulate certain mitochondrially encoded genes and gluconeogenic genes and may regulate docking of PPARGC1A to transcription factors. Seems to be involved in the transcription regulation of the multidrug-related genes MDR1 and MVP. Part of a nuclear factor that binds to the invMED1 element of MDR1 and MVP gene promoters. Binds single-stranded DNA. Required for maintaining mitochondrial potential. Suppresses the initiation of basal levels of autophagy and mitophagy by sustaining BCL2 levels. The protein is Leucine-rich PPR motif-containing protein, mitochondrial (Lrpprc) of Mus musculus (Mouse).